The primary structure comprises 134 residues: Translation initiation factor 2 subunit beta (134 aa).

This sequence belongs to the eIF-2-beta/eIF-5 family. In terms of assembly, heterotrimer composed of an alpha, a beta and a gamma chain.

In terms of biological role, eIF-2 functions in the early steps of protein synthesis by forming a ternary complex with GTP and initiator tRNA. This Pyrobaculum calidifontis (strain DSM 21063 / JCM 11548 / VA1) protein is Translation initiation factor 2 subunit beta.